We begin with the raw amino-acid sequence, 223 residues long: MRLVIAQCTVDYVGRLTAHLPSARRLLLFKADGSVSVHADDRAYKPLNWMSPPCWLTEEPGGDSPVWVVTNKGGEQLRISVEEIEHDSSHELGVDPGLVKDGVEAHLQVLLAEHVQLLGEGYTLVRREYMTAIGPVDLLCRDESGGAVAVEIKRRGEIDGVEQLTRYLELLNRDSVLAPVKGVFAAQQIKPQARTLATDRGIRCVTLDYDKMRGMDSDEYRLF.

The protein belongs to the NucS endonuclease family.

The protein localises to the cytoplasm. Cleaves both 3' and 5' ssDNA extremities of branched DNA structures. The protein is Endonuclease NucS of Mycobacterium marinum (strain ATCC BAA-535 / M).